A 202-amino-acid polypeptide reads, in one-letter code: Protein-methionine-sulfoxide reductase heme-binding subunit MsrQ (202 aa).

6 helical membrane passes run 8 to 28, 42 to 62, 75 to 95, 110 to 130, 147 to 167, and 169 to 189; these read LAVFLGALAVPAWWLYQAWIF, LGLGALVLLLLTLAMTPLQKL, LGLWCFTYVLLHLSAYCVFIL, PYIIVGMLGFVCLFLLAITSN, LVYLILGLGLLHMLWVVRADL, and EWTLYAVVGASLMLLRLPSIA.

It belongs to the MsrQ family. In terms of assembly, heterodimer of a catalytic subunit (MsrP) and a heme-binding subunit (MsrQ). FMN serves as cofactor. Requires heme b as cofactor.

The protein localises to the cell inner membrane. Functionally, part of the MsrPQ system that repairs oxidized periplasmic proteins containing methionine sulfoxide residues (Met-O), using respiratory chain electrons. Thus protects these proteins from oxidative-stress damage caused by reactive species of oxygen and chlorine generated by the host defense mechanisms. MsrPQ is essential for the maintenance of envelope integrity under bleach stress, rescuing a wide series of structurally unrelated periplasmic proteins from methionine oxidation. MsrQ provides electrons for reduction to the reductase catalytic subunit MsrP, using the quinone pool of the respiratory chain. This Pseudomonas aeruginosa (strain UCBPP-PA14) protein is Protein-methionine-sulfoxide reductase heme-binding subunit MsrQ.